The primary structure comprises 269 residues: Gem-associated protein 2 (269 aa).

A phosphoserine mark is found at serine 70 and serine 155.

Belongs to the gemin-2 family. In terms of assembly, monomer. Part of the core SMN complex that contains SMN1, GEMIN2/SIP1, DDX20/GEMIN3, GEMIN4, GEMIN5, GEMIN6, GEMIN7, GEMIN8 and STRAP/UNRIP. Part of the SMN-Sm complex that contains SMN1, GEMIN2/SIP1, DDX20/GEMIN3, GEMIN4, GEMIN5, GEMIN6, GEMIN7, GEMIN8, STRAP/UNRIP and the Sm proteins SNRPB, SNRPD1, SNRPD2, SNRPD3, SNRPE, SNRPF and SNRPG. Interacts with GEMIN5; the interaction is direct. Interacts (via C-terminus) with SMN1; the interaction is direct. Interacts with SNRPD1; the interaction is direct. Interacts with SNRPD2; the interaction is direct. Interacts (via N-terminus) with SNRPF; the interaction is direct. Interacts (via N-terminus) with SNRPE; the interaction is direct. Interacts (via N-terminus) with SNRPG; the interaction is direct.

The protein localises to the nucleus. It localises to the gem. It is found in the cytoplasm. In terms of biological role, the SMN complex catalyzes the assembly of small nuclear ribonucleoproteins (snRNPs), the building blocks of the spliceosome, and thereby plays an important role in the splicing of cellular pre-mRNAs. Most spliceosomal snRNPs contain a common set of Sm proteins SNRPB, SNRPD1, SNRPD2, SNRPD3, SNRPE, SNRPF and SNRPG that assemble in a heptameric protein ring on the Sm site of the small nuclear RNA to form the core snRNP (Sm core). In the cytosol, the Sm proteins SNRPD1, SNRPD2, SNRPE, SNRPF and SNRPG (5Sm) are trapped in an inactive 6S pICln-Sm complex by the chaperone CLNS1A that controls the assembly of the core snRNP. To assemble core snRNPs, the SMN complex accepts the trapped 5Sm proteins from CLNS1A. Binding of snRNA inside 5Sm ultimately triggers eviction of the SMN complex, thereby allowing binding of SNRPD3 and SNRPB to complete assembly of the core snRNP. Within the SMN complex, GEMIN2 constrains the conformation of 5Sm, thereby promoting 5Sm binding to snRNA containing the snRNP code (a nonameric Sm site and a 3'-adjacent stem-loop), thus preventing progression of assembly until a cognate substrate is bound. The chain is Gem-associated protein 2 from Mus musculus (Mouse).